The primary structure comprises 85 residues: U4-theraphotoxin-Hhn1a (85 aa).

The N-terminal stretch at 1–22 (MKVTLIAILTCAAVLVLHTTAA) is a signal peptide. The propeptide occupies 23 to 48 (EEFEAESQLMEVGMPDTELAAVDEER). Intrachain disulfides connect C52/C66, C56/C77, and C71/C82.

It belongs to the neurotoxin 12 (Hwtx-2) family. 02 (Hwtx-2) subfamily. In terms of assembly, monomer. In terms of tissue distribution, expressed by the venom gland.

It localises to the secreted. Functionally, neurotoxin active on both insects and mammals. In Cyriopagopus hainanus (Chinese bird spider), this protein is U4-theraphotoxin-Hhn1a.